The primary structure comprises 162 residues: Interleukin-15 (162 aa).

The signal sequence occupies residues 1 to 29; sequence MRILKPYLRSTSIQCYLCLLLNSHFLTEA. The propeptide occupies 30–48; that stretch reads GIHVFILGCISASLPKTEA. Disulfide bonds link Cys-83/Cys-133 and Cys-90/Cys-136. N-linked (GlcNAc...) asparagine glycans are attached at residues Asn-104, Asn-113, Asn-121, and Asn-127.

Belongs to the IL-15/IL-21 family.

The protein localises to the secreted. In terms of biological role, cytokine that plays a major role in the development of inflammatory and protective immune responses to microbial invaders and parasites by modulating immune cells of both the innate and adaptive immune systems. Stimulates the proliferation of natural killer cells, T-cells and B-cells and promotes the secretion of several cytokines. In monocytes, induces the production of IL8 and monocyte chemotactic protein 1/CCL2, two chemokines that attract neutrophils and monocytes respectively to sites of infection. Unlike most cytokines, which are secreted in soluble form, IL15 is expressed in association with its high affinity IL15RA on the surface of IL15-producing cells and delivers signals to target cells that express IL2RB and IL2RG receptor subunits. Binding to its receptor triggers the phosphorylation of JAK1 and JAK3 and the recruitment and subsequent phosphorylation of signal transducer and activator of transcription-3/STAT3 and STAT5. In mast cells, induces the rapid tyrosine phosphorylation of STAT6 and thereby controls mast cell survival and release of cytokines such as IL4. The sequence is that of Interleukin-15 (IL15) from Bos taurus (Bovine).